Reading from the N-terminus, the 1064-residue chain is Carbamoyl phosphate synthase large chain (1064 aa).

A carboxyphosphate synthetic domain region spans residues 1–401 (MPKRNDIKKI…SLLKAVRSLE (401 aa)). Residues Arg-129, Arg-169, Gly-175, Gly-176, Glu-208, Ile-210, Glu-215, Gly-241, Val-242, His-243, Gln-284, and Glu-298 each coordinate ATP. An ATP-grasp 1 domain is found at 133–327 (KELCERIGEP…IAKMSAKIAI (195 aa)). Mg(2+) is bound by residues Gln-284, Glu-298, and Asn-300. Mn(2+)-binding residues include Gln-284, Glu-298, and Asn-300. An oligomerization domain region spans residues 402–546 (IGVFHNDLQE…YSTYEWENES (145 aa)). The interval 547-929 (KRSSKEKIIV…ALYKSFEAAK (383 aa)) is carbamoyl phosphate synthetic domain. Positions 671-861 (EKALQDLEIP…MAQLATQMIL (191 aa)) constitute an ATP-grasp 2 domain. Residues Arg-707, Ser-746, Leu-748, Glu-752, Gly-777, Val-778, His-779, Ser-780, Gln-820, and Glu-832 each coordinate ATP. Positions 820, 832, and 834 each coordinate Mg(2+). Mn(2+) contacts are provided by Gln-820, Glu-832, and Asn-834. Positions 930-1064 (LHMADYGSVL…QSRSFTTKNI (135 aa)) constitute an MGS-like domain. Residues 930-1064 (LHMADYGSVL…QSRSFTTKNI (135 aa)) are allosteric domain.

This sequence belongs to the CarB family. Composed of two chains; the small (or glutamine) chain promotes the hydrolysis of glutamine to ammonia, which is used by the large (or ammonia) chain to synthesize carbamoyl phosphate. Tetramer of heterodimers (alpha,beta)4. Mg(2+) serves as cofactor. It depends on Mn(2+) as a cofactor.

The catalysed reaction is hydrogencarbonate + L-glutamine + 2 ATP + H2O = carbamoyl phosphate + L-glutamate + 2 ADP + phosphate + 2 H(+). It carries out the reaction hydrogencarbonate + NH4(+) + 2 ATP = carbamoyl phosphate + 2 ADP + phosphate + 2 H(+). It functions in the pathway amino-acid biosynthesis; L-arginine biosynthesis; carbamoyl phosphate from bicarbonate: step 1/1. The protein operates within pyrimidine metabolism; UMP biosynthesis via de novo pathway; (S)-dihydroorotate from bicarbonate: step 1/3. In terms of biological role, large subunit of the glutamine-dependent carbamoyl phosphate synthetase (CPSase). CPSase catalyzes the formation of carbamoyl phosphate from the ammonia moiety of glutamine, carbonate, and phosphate donated by ATP, constituting the first step of 2 biosynthetic pathways, one leading to arginine and/or urea and the other to pyrimidine nucleotides. The large subunit (synthetase) binds the substrates ammonia (free or transferred from glutamine from the small subunit), hydrogencarbonate and ATP and carries out an ATP-coupled ligase reaction, activating hydrogencarbonate by forming carboxy phosphate which reacts with ammonia to form carbamoyl phosphate. In Lactococcus lactis subsp. lactis (strain IL1403) (Streptococcus lactis), this protein is Carbamoyl phosphate synthase large chain.